The sequence spans 383 residues: Acetylornithine deacetylase (383 aa).

Residue His-80 coordinates Zn(2+). Asp-82 is an active-site residue. Residue Asp-112 participates in Zn(2+) binding. Glu-144 is an active-site residue. The Zn(2+) site is built by Glu-145, Glu-169, and His-355.

Belongs to the peptidase M20A family. ArgE subfamily. In terms of assembly, homodimer. Zn(2+) serves as cofactor. It depends on Co(2+) as a cofactor. The cofactor is glutathione.

The protein resides in the cytoplasm. The enzyme catalyses N(2)-acetyl-L-ornithine + H2O = L-ornithine + acetate. It functions in the pathway amino-acid biosynthesis; L-arginine biosynthesis; L-ornithine from N(2)-acetyl-L-ornithine (linear): step 1/1. Its function is as follows. Catalyzes the hydrolysis of the amide bond of N(2)-acetylated L-amino acids. Cleaves the acetyl group from N-acetyl-L-ornithine to form L-ornithine, an intermediate in L-arginine biosynthesis pathway, and a branchpoint in the synthesis of polyamines. This chain is Acetylornithine deacetylase, found in Escherichia coli O9:H4 (strain HS).